A 338-amino-acid chain; its full sequence is 1-aminocyclopropane-1-carboxylate deaminase (338 aa).

Lysine 51 bears the N6-(pyridoxal phosphate)lysine mark. Serine 78 serves as the catalytic Nucleophile.

Belongs to the ACC deaminase/D-cysteine desulfhydrase family. Homotrimer. Requires pyridoxal 5'-phosphate as cofactor.

The enzyme catalyses 1-aminocyclopropane-1-carboxylate + H2O = 2-oxobutanoate + NH4(+). Catalyzes a cyclopropane ring-opening reaction, the irreversible conversion of 1-aminocyclopropane-1-carboxylate (ACC) to ammonia and alpha-ketobutyrate. Allows growth on ACC as a nitrogen source. The sequence is that of 1-aminocyclopropane-1-carboxylate deaminase from Ralstonia pickettii (strain 12J).